Reading from the N-terminus, the 581-residue chain is Phosphoinositide phospholipase C 2 (581 aa).

An EF-hand-like domain is found at 26-102 (EIKTIFEKYS…NPPLALHKVH (77 aa)). A PI-PLC X-box domain is found at 103 to 248 (HDMDAPISHY…LKRRIIISTK (146 aa)). Residues histidine 118 and histidine 164 contribute to the active site. The disordered stretch occupies residues 279 to 314 (PSFIQRNKSEAKDDLDGNDDDDDDDDEDKSKINAPP). A compositionally biased stretch (acidic residues) spans 294–305 (DGNDDDDDDDDE). The PI-PLC Y-box domain maps to 317-433 (KHLIAIHAGK…GYIKKPDLLL (117 aa)). In terms of domain architecture, C2 spans 434–563 (KSGSDSDIFD…EGIRAFPLHS (130 aa)).

The cofactor is Ca(2+). Post-translationally, phosphorylation level varies significantly during early response to bacterial elicitor. In terms of tissue distribution, expressed in roots, shoots, leaves and flowers.

It is found in the cell membrane. The enzyme catalyses a 1,2-diacyl-sn-glycero-3-phospho-(1D-myo-inositol-4,5-bisphosphate) + H2O = 1D-myo-inositol 1,4,5-trisphosphate + a 1,2-diacyl-sn-glycerol + H(+). Its function is as follows. The production of the second messenger molecules diacylglycerol (DAG) and inositol 1,4,5-trisphosphate (IP3) is mediated by activated phosphatidylinositol-specific phospholipase C enzymes. At physiological calcium concentration, the preferred substrate is phosphatidylinositol 4,5-bisphosphate versus phosphatidylinositol. This is Phosphoinositide phospholipase C 2 (PLC2) from Arabidopsis thaliana (Mouse-ear cress).